The chain runs to 207 residues: Large ribosomal subunit protein uL4 (207 aa).

Belongs to the universal ribosomal protein uL4 family. As to quaternary structure, part of the 50S ribosomal subunit.

Functionally, one of the primary rRNA binding proteins, this protein initially binds near the 5'-end of the 23S rRNA. It is important during the early stages of 50S assembly. It makes multiple contacts with different domains of the 23S rRNA in the assembled 50S subunit and ribosome. Its function is as follows. Forms part of the polypeptide exit tunnel. In Rickettsia rickettsii (strain Iowa), this protein is Large ribosomal subunit protein uL4.